The chain runs to 127 residues: Large ribosomal subunit protein bL12 (127 aa).

A disordered region spans residues 101–127 (VKTGVSKEEAEDAKKQLVESGAEVEIK). The span at 105 to 117 (VSKEEAEDAKKQL) shows a compositional bias: basic and acidic residues.

The protein belongs to the bacterial ribosomal protein bL12 family. In terms of assembly, homodimer. Part of the ribosomal stalk of the 50S ribosomal subunit. Forms a multimeric L10(L12)X complex, where L10 forms an elongated spine to which 2 to 4 L12 dimers bind in a sequential fashion. Binds GTP-bound translation factors.

Forms part of the ribosomal stalk which helps the ribosome interact with GTP-bound translation factors. Is thus essential for accurate translation. This Geobacter metallireducens (strain ATCC 53774 / DSM 7210 / GS-15) protein is Large ribosomal subunit protein bL12.